A 369-amino-acid chain; its full sequence is Dihydroorotate dehydrogenase (quinone) (369 aa).

FMN-binding positions include 66 to 70 (AGFDK) and threonine 90. Position 70 (lysine 70) interacts with substrate. Position 115–119 (115–119 (NRMGF)) interacts with substrate. FMN contacts are provided by asparagine 143 and asparagine 176. Asparagine 176 is a binding site for substrate. Serine 179 (nucleophile) is an active-site residue. Substrate is bound at residue asparagine 181. The FMN site is built by lysine 217 and threonine 245. 246–247 (NT) serves as a coordination point for substrate. FMN contacts are provided by residues glycine 271, glycine 300, and 321-322 (YT).

It belongs to the dihydroorotate dehydrogenase family. Type 2 subfamily. Monomer. Requires FMN as cofactor.

Its subcellular location is the cell membrane. The enzyme catalyses (S)-dihydroorotate + a quinone = orotate + a quinol. Its pathway is pyrimidine metabolism; UMP biosynthesis via de novo pathway; orotate from (S)-dihydroorotate (quinone route): step 1/1. Functionally, catalyzes the conversion of dihydroorotate to orotate with quinone as electron acceptor. This is Dihydroorotate dehydrogenase (quinone) from Nocardia farcinica (strain IFM 10152).